Reading from the N-terminus, the 1053-residue chain is Sal-like protein 4 (1053 aa).

A disordered region spans residues 1-62 (MSRRKQAKPQ…DEVASEDEAT (62 aa)). Over residues 20–46 (EQQPQQQTPEFADAAPAAPAAGELGAP) the composition is skewed to low complexity. Phosphoserine is present on S57. A C2H2-type 1; atypical zinc finger spans residues 72–94 (HVCEKCCAEFFSISEFLEHKKNC). The disordered stretch occupies residues 116-149 (SGAVLSHQPTSPGSKDCHRENGGSSEDMKEKPDA). Basic and acidic residues predominate over residues 130–149 (KDCHRENGGSSEDMKEKPDA). K156 is covalently cross-linked (Glycyl lysine isopeptide (Lys-Gly) (interchain with G-Cter in SUMO1); alternate). K156 is covalently cross-linked (Glycyl lysine isopeptide (Lys-Gly) (interchain with G-Cter in SUMO2); alternate). Glycyl lysine isopeptide (Lys-Gly) (interchain with G-Cter in SUMO2) cross-links involve residues K175, K190, and K290. Phosphoserine is present on S307. K316 is covalently cross-linked (Glycyl lysine isopeptide (Lys-Gly) (interchain with G-Cter in SUMO1); alternate). Residue K316 forms a Glycyl lysine isopeptide (Lys-Gly) (interchain with G-Cter in SUMO2); alternate linkage. Residue K372 forms a Glycyl lysine isopeptide (Lys-Gly) (interchain with G-Cter in SUMO2) linkage. K374 is covalently cross-linked (Glycyl lysine isopeptide (Lys-Gly) (interchain with G-Cter in SUMO1); alternate). K374 is covalently cross-linked (Glycyl lysine isopeptide (Lys-Gly) (interchain with G-Cter in SUMO2); alternate). 2 C2H2-type zinc fingers span residues 382-404 (HKCK…LRSH) and 410-432 (FVCS…FHRH). K436 is covalently cross-linked (Glycyl lysine isopeptide (Lys-Gly) (interchain with G-Cter in SUMO2)). The span at 483-496 (VGLPQNLSSGTNPK) shows a compositional bias: polar residues. Residues 483–546 (VGLPQNLSSG…QGSGTPEPGS (64 aa)) are disordered. T541 is modified (phosphothreonine). A Glycyl lysine isopeptide (Lys-Gly) (interchain with G-Cter in SUMO2) cross-link involves residue K550. 2 C2H2-type zinc fingers span residues 566 to 588 (NECL…YRTH) and 594 to 616 (FQCK…LGVH). Residues K597 and K623 each participate in a glycyl lysine isopeptide (Lys-Gly) (interchain with G-Cter in SUMO2) cross-link. Residues 626 to 648 (HSCPICQKKFTNAVMLQQHIRMH) form a C2H2-type 6 zinc finger. Disordered regions lie at residues 694–714 (EEVS…PLPS), 736–776 (VGPA…QSRS), and 788–828 (LSPA…LPST). Residues 698–708 (SQEAPSSSSKV) are compositionally biased toward low complexity. Polar residues-rich tracts occupy residues 743-776 (LQRQ…QSRS) and 788-797 (LSPANSQAES). S776 and S789 each carry phosphoserine. Residues 810-821 (ESSENSRTEMEG) are compositionally biased toward basic and acidic residues. K838 participates in a covalent cross-link: Glycyl lysine isopeptide (Lys-Gly) (interchain with G-Cter in SUMO1); alternate. K838 is covalently cross-linked (Glycyl lysine isopeptide (Lys-Gly) (interchain with G-Cter in SUMO2); alternate). The residue at position 852 (S852) is a Phosphoserine. The C2H2-type 7 zinc finger occupies 870–892 (HGCTRCGKNFSSASALQIHERTH). K896 participates in a covalent cross-link: Glycyl lysine isopeptide (Lys-Gly) (interchain with G-Cter in SUMO2). The segment at 898 to 920 (FVCNICGRAFTTKGNLKVHYMTH) adopts a C2H2-type 8 zinc-finger fold. Residues K932 and K947 each participate in a glycyl lysine isopeptide (Lys-Gly) (interchain with G-Cter in SUMO2) cross-link. Residues 1018-1039 (GSQSGISADVEKPSATDGVPKH) are disordered. S1019 carries the post-translational modification Phosphoserine.

This sequence belongs to the sal C2H2-type zinc-finger protein family. Interacts with POU5F1/OCT4. Interacts with NANOG. Interacts with BEND3. Interacts with NSD2 (via PHD-type zinc fingers 1, 2 and 3). Interacts with NRBP1. In terms of processing, isoform SALL4B exists primarily as a ubiquitinated form. Sumoylation with both SUMO1 and SUMO2 regulates the stability, subcellular localization, transcriptional activity, and may reduce interaction with POU5F1/OCT4. Expressed in testis. Constitutively expressed in acute myeloid leukemia (AML).

Its subcellular location is the cytoplasm. It is found in the nucleus. Transcription factor with a key role in the maintenance and self-renewal of embryonic and hematopoietic stem cells. In Homo sapiens (Human), this protein is Sal-like protein 4 (SALL4).